Reading from the N-terminus, the 329-residue chain is UPF0421 protein SH1063 (329 aa).

A run of 5 helical transmembrane segments spans residues 25–45, 60–80, 87–107, 108–128, and 131–151; these read LFCLMLDLTPIFAILTAIVTI, LPATVIGALFAVLFTFIFGDP, FSALFTILVCTKLNLQVGTTV, AVLTSVAMIPGIHDAYLFNFF, and LLTALIGLVTAGLVNFIVLPP.

This sequence belongs to the UPF0421 family.

The protein localises to the cell membrane. This chain is UPF0421 protein SH1063, found in Staphylococcus haemolyticus (strain JCSC1435).